The primary structure comprises 204 residues: Guanylate kinase (204 aa).

Residues 18–198 (GKLIIFSAPS…AKAETLEVIK (181 aa)) form the Guanylate kinase-like domain. An ATP-binding site is contributed by 25 to 32 (APSGSGKS).

Belongs to the guanylate kinase family.

Its subcellular location is the cytoplasm. The enzyme catalyses GMP + ATP = GDP + ADP. Its function is as follows. Essential for recycling GMP and indirectly, cGMP. This is Guanylate kinase from Bacteroides thetaiotaomicron (strain ATCC 29148 / DSM 2079 / JCM 5827 / CCUG 10774 / NCTC 10582 / VPI-5482 / E50).